The sequence spans 376 residues: Glutamate 5-kinase (376 aa).

Residue Lys15 coordinates ATP. Ser56, Asp143, and Asn155 together coordinate substrate. Residue 175-176 (SD) coordinates ATP. One can recognise a PUA domain in the interval 281–358 (KGTLTIDAGA…PDVMSILGVS (78 aa)).

It belongs to the glutamate 5-kinase family.

The protein localises to the cytoplasm. It catalyses the reaction L-glutamate + ATP = L-glutamyl 5-phosphate + ADP. It participates in amino-acid biosynthesis; L-proline biosynthesis; L-glutamate 5-semialdehyde from L-glutamate: step 1/2. Functionally, catalyzes the transfer of a phosphate group to glutamate to form L-glutamate 5-phosphate. In Rhodopseudomonas palustris (strain HaA2), this protein is Glutamate 5-kinase.